We begin with the raw amino-acid sequence, 470 residues long: ATP synthase subunit beta 2 (470 aa).

155–162 (GGAGVGKT) is an ATP binding site.

This sequence belongs to the ATPase alpha/beta chains family. In terms of assembly, F-type ATPases have 2 components, CF(1) - the catalytic core - and CF(0) - the membrane proton channel. CF(1) has five subunits: alpha(3), beta(3), gamma(1), delta(1), epsilon(1). CF(0) has three main subunits: a(1), b(2) and c(9-12). The alpha and beta chains form an alternating ring which encloses part of the gamma chain. CF(1) is attached to CF(0) by a central stalk formed by the gamma and epsilon chains, while a peripheral stalk is formed by the delta and b chains.

It is found in the cell inner membrane. It carries out the reaction ATP + H2O + 4 H(+)(in) = ADP + phosphate + 5 H(+)(out). Functionally, produces ATP from ADP in the presence of a proton gradient across the membrane. The catalytic sites are hosted primarily by the beta subunits. The protein is ATP synthase subunit beta 2 of Nitrosospira multiformis (strain ATCC 25196 / NCIMB 11849 / C 71).